The chain runs to 391 residues: Elongation factor Tu (391 aa).

Residues 10-201 (KPHVNIGTIG…AVDDYIPTPE (192 aa)) form the tr-type G domain. The tract at residues 19-26 (GHVDHGKT) is G1. Residue 19–26 (GHVDHGKT) coordinates GTP. Residue Thr26 coordinates Mg(2+). A G2 region spans residues 55-59 (GITIS). Residues 76–79 (DCPG) form a G3 region. GTP contacts are provided by residues 76–80 (DCPGH) and 131–134 (NKCD). A G4 region spans residues 131–134 (NKCD). The tract at residues 169–171 (SAL) is G5.

The protein belongs to the TRAFAC class translation factor GTPase superfamily. Classic translation factor GTPase family. EF-Tu/EF-1A subfamily. As to quaternary structure, monomer.

Its subcellular location is the cytoplasm. The catalysed reaction is GTP + H2O = GDP + phosphate + H(+). Its function is as follows. GTP hydrolase that promotes the GTP-dependent binding of aminoacyl-tRNA to the A-site of ribosomes during protein biosynthesis. The polypeptide is Elongation factor Tu (Brucella anthropi (strain ATCC 49188 / DSM 6882 / CCUG 24695 / JCM 21032 / LMG 3331 / NBRC 15819 / NCTC 12168 / Alc 37) (Ochrobactrum anthropi)).